The following is a 295-amino-acid chain: Acetylglutamate kinase (295 aa).

Substrate is bound by residues 61-62 (GG), Arg83, and Asn187.

This sequence belongs to the acetylglutamate kinase family. ArgB subfamily.

The protein localises to the cytoplasm. The enzyme catalyses N-acetyl-L-glutamate + ATP = N-acetyl-L-glutamyl 5-phosphate + ADP. The protein operates within amino-acid biosynthesis; L-arginine biosynthesis; N(2)-acetyl-L-ornithine from L-glutamate: step 2/4. Catalyzes the ATP-dependent phosphorylation of N-acetyl-L-glutamate. This Methanocorpusculum labreanum (strain ATCC 43576 / DSM 4855 / Z) protein is Acetylglutamate kinase.